A 106-amino-acid polypeptide reads, in one-letter code: ATP-dependent Clp protease adapter protein ClpS (106 aa).

The protein belongs to the ClpS family. Binds to the N-terminal domain of the chaperone ClpA.

In terms of biological role, involved in the modulation of the specificity of the ClpAP-mediated ATP-dependent protein degradation. This Edwardsiella ictaluri (strain 93-146) protein is ATP-dependent Clp protease adapter protein ClpS.